A 358-amino-acid polypeptide reads, in one-letter code: Putative ZDHHC-type palmitoyltransferase 4 (358 aa).

4 consecutive transmembrane segments (helical) span residues 28–48 (FVGFATSLITLIAITYFTIIF), 57–77 (LFFIFNFFCDLSISLFLTYGI), 171–191 (YFFLFLSYLWVSVCYVLAHSL), and 210–230 (LLVIISSIGSFITFVAVGSFG). Residues 127-177 (SYCKKCSKAKPPRCHHCSVCDKCVLKMDHHCPWIGGCVGFYNYRYFFLFLS) form the DHHC domain. N-linked (GlcNAc...) asparagine glycosylation is found at Asn-255 and Asn-296. Positions 302-358 (NNKNNENNENNENNEIDNHNNNNNNNNNNNNNEKEDNINENDNLISYDTDEYNRHKK) are disordered. A compositionally biased stretch (low complexity) spans 305–332 (NNENNENNENNEIDNHNNNNNNNNNNNN).

The protein belongs to the DHHC palmitoyltransferase family.

Its subcellular location is the membrane. It catalyses the reaction L-cysteinyl-[protein] + hexadecanoyl-CoA = S-hexadecanoyl-L-cysteinyl-[protein] + CoA. The protein is Putative ZDHHC-type palmitoyltransferase 4 of Dictyostelium discoideum (Social amoeba).